Here is a 303-residue protein sequence, read N- to C-terminus: Diaminopimelate epimerase (303 aa).

Substrate contacts are provided by N15, Q47, and N67. Catalysis depends on C76, which acts as the Proton donor. Residues 77–78, N163, N197, and 215–216 each bind substrate; these read GN and ER. The active-site Proton acceptor is C224. 225–226 is a substrate binding site; that stretch reads GS. Residues 279–303 are disordered; it reads DPATGEWSRDTQGLQGSGNADRGTA.

Belongs to the diaminopimelate epimerase family. Homodimer.

The protein resides in the cytoplasm. It carries out the reaction (2S,6S)-2,6-diaminopimelate = meso-2,6-diaminopimelate. Its pathway is amino-acid biosynthesis; L-lysine biosynthesis via DAP pathway; DL-2,6-diaminopimelate from LL-2,6-diaminopimelate: step 1/1. Its function is as follows. Catalyzes the stereoinversion of LL-2,6-diaminopimelate (L,L-DAP) to meso-diaminopimelate (meso-DAP), a precursor of L-lysine and an essential component of the bacterial peptidoglycan. The polypeptide is Diaminopimelate epimerase (Brucella canis (strain ATCC 23365 / NCTC 10854 / RM-666)).